Here is a 495-residue protein sequence, read N- to C-terminus: UDP-N-acetylmuramoyl-L-alanyl-D-glutamate--2,6-diaminopimelate ligase (495 aa).

Residues L27, S29, and H44–A46 each bind UDP-N-acetyl-alpha-D-muramoyl-L-alanyl-D-glutamate. G116–T122 lines the ATP pocket. UDP-N-acetyl-alpha-D-muramoyl-L-alanyl-D-glutamate contacts are provided by residues N157, T158–T159, S185, Q191, and R193. K225 carries the post-translational modification N6-carboxylysine. Meso-2,6-diaminopimelate-binding positions include R390, D414–R417, G465, and E469. The short motif at D414–R417 is the Meso-diaminopimelate recognition motif element.

Belongs to the MurCDEF family. MurE subfamily. It depends on Mg(2+) as a cofactor. In terms of processing, carboxylation is probably crucial for Mg(2+) binding and, consequently, for the gamma-phosphate positioning of ATP.

The protein resides in the cytoplasm. It carries out the reaction UDP-N-acetyl-alpha-D-muramoyl-L-alanyl-D-glutamate + meso-2,6-diaminopimelate + ATP = UDP-N-acetyl-alpha-D-muramoyl-L-alanyl-gamma-D-glutamyl-meso-2,6-diaminopimelate + ADP + phosphate + H(+). Its pathway is cell wall biogenesis; peptidoglycan biosynthesis. Functionally, catalyzes the addition of meso-diaminopimelic acid to the nucleotide precursor UDP-N-acetylmuramoyl-L-alanyl-D-glutamate (UMAG) in the biosynthesis of bacterial cell-wall peptidoglycan. The polypeptide is UDP-N-acetylmuramoyl-L-alanyl-D-glutamate--2,6-diaminopimelate ligase (Enterobacter sp. (strain 638)).